The sequence spans 203 residues: Enterotoxin-like toxin X (203 aa).

It belongs to the staphylococcal/streptococcal toxin family.

It is found in the secreted. In terms of biological role, plays a role in the inhibition of the host innate immune system. Inhibits phagocytosis and killing by human neutrophils by interacting with multiple neutrophil surface glycoproteins in a sialic acid-dependent manner. The sequence is that of Enterotoxin-like toxin X from Staphylococcus aureus (strain NCTC 8325 / PS 47).